The chain runs to 362 residues: S-adenosylmethionine:tRNA ribosyltransferase-isomerase (362 aa).

Belongs to the QueA family. Monomer.

The protein resides in the cytoplasm. It catalyses the reaction 7-aminomethyl-7-carbaguanosine(34) in tRNA + S-adenosyl-L-methionine = epoxyqueuosine(34) in tRNA + adenine + L-methionine + 2 H(+). The protein operates within tRNA modification; tRNA-queuosine biosynthesis. In terms of biological role, transfers and isomerizes the ribose moiety from AdoMet to the 7-aminomethyl group of 7-deazaguanine (preQ1-tRNA) to give epoxyqueuosine (oQ-tRNA). The protein is S-adenosylmethionine:tRNA ribosyltransferase-isomerase of Xanthobacter autotrophicus (strain ATCC BAA-1158 / Py2).